The primary structure comprises 172 residues: Stellate protein CG33243 (172 aa).

The protein belongs to the casein kinase 2 subunit beta family. Interacts in vitro with the casein kinase 2 alpha subunit (CkII-alpha). The relevance of such interaction is however unclear in vivo. In terms of tissue distribution, probably not expressed in wild-type flies. In males lacking the Y chromosome, it is testis-specific and constitutes the main component of star-shaped crystals.

Functionally, unknown. In males lacking the Y chromosome, its strong overexpression leads to the appearance of proteinaceous star-shaped crystals in the primary spermatocytes causing meiotic drive, possibly by interfering with normal casein kinase 2 activity. The chain is Stellate protein CG33243 (Ste:CG33243) from Drosophila melanogaster (Fruit fly).